The sequence spans 317 residues: Putative S-adenosyl-L-methionine-dependent methyltransferase MSMEG_0093 (317 aa).

Residues D134 and 163–164 (DL) each bind S-adenosyl-L-methionine.

It belongs to the UPF0677 family.

Functionally, exhibits S-adenosyl-L-methionine-dependent methyltransferase activity. This chain is Putative S-adenosyl-L-methionine-dependent methyltransferase MSMEG_0093, found in Mycolicibacterium smegmatis (strain ATCC 700084 / mc(2)155) (Mycobacterium smegmatis).